The sequence spans 330 residues: Aspartate--ammonia ligase (330 aa).

This sequence belongs to the class-II aminoacyl-tRNA synthetase family. AsnA subfamily.

It is found in the cytoplasm. The enzyme catalyses L-aspartate + NH4(+) + ATP = L-asparagine + AMP + diphosphate + H(+). It participates in amino-acid biosynthesis; L-asparagine biosynthesis; L-asparagine from L-aspartate (ammonia route): step 1/1. In Mannheimia succiniciproducens (strain KCTC 0769BP / MBEL55E), this protein is Aspartate--ammonia ligase.